The chain runs to 414 residues: Serine hydroxymethyltransferase (414 aa).

(6S)-5,6,7,8-tetrahydrofolate contacts are provided by residues L116 and 120-122 (GHL). At K224 the chain carries N6-(pyridoxal phosphate)lysine. Residues E240 and 348–350 (SPF) contribute to the (6S)-5,6,7,8-tetrahydrofolate site.

Belongs to the SHMT family. Homodimer. Pyridoxal 5'-phosphate serves as cofactor.

Its subcellular location is the cytoplasm. The catalysed reaction is (6R)-5,10-methylene-5,6,7,8-tetrahydrofolate + glycine + H2O = (6S)-5,6,7,8-tetrahydrofolate + L-serine. The protein operates within one-carbon metabolism; tetrahydrofolate interconversion. It participates in amino-acid biosynthesis; glycine biosynthesis; glycine from L-serine: step 1/1. Catalyzes the reversible interconversion of serine and glycine with tetrahydrofolate (THF) serving as the one-carbon carrier. This reaction serves as the major source of one-carbon groups required for the biosynthesis of purines, thymidylate, methionine, and other important biomolecules. Also exhibits THF-independent aldolase activity toward beta-hydroxyamino acids, producing glycine and aldehydes, via a retro-aldol mechanism. The protein is Serine hydroxymethyltransferase of Campylobacter fetus subsp. fetus (strain 82-40).